The sequence spans 455 residues: Beta-cyclopiazonate dehydrogenase (455 aa).

Positions 1–25 are cleaved as a signal peptide; sequence MAVRIARFLGLSTVAYLALANGIDA.

It belongs to the beta-cyclopiazonate dehydrogenase family. It depends on FAD as a cofactor.

The enzyme catalyses beta-cyclopiazonate + A = alpha-cyclopiazonate + AH2. Beta-cyclopiazonate dehydrogenase involved in the synthesis of the fungal neurotoxin alpha-cyclopiazonic acid (CPA). CpaO carries out the dehydrogenation of beta-CPA to yield an unstable enimine product, which is captured by intramolecular cyclization to create the pentacyclic fused scaffold of alpha-cyclopiazonate. In Aspergillus oryzae (strain ATCC 42149 / RIB 40) (Yellow koji mold), this protein is Beta-cyclopiazonate dehydrogenase.